The following is an 86-amino-acid chain: UPF0457 protein BCE33L2265 (86 aa).

It belongs to the UPF0457 family.

The protein is UPF0457 protein BCE33L2265 of Bacillus cereus (strain ZK / E33L).